A 206-amino-acid polypeptide reads, in one-letter code: Large ribosomal subunit protein uL4 (206 aa).

The tract at residues 46 to 89 (GNRAQKTRAEVKHSTKKPWRQKGTGRARSGMTSSPLWRKGGRAF) is disordered. Over residues 59–70 (STKKPWRQKGTG) the composition is skewed to basic residues.

Belongs to the universal ribosomal protein uL4 family. As to quaternary structure, part of the 50S ribosomal subunit.

Functionally, one of the primary rRNA binding proteins, this protein initially binds near the 5'-end of the 23S rRNA. It is important during the early stages of 50S assembly. It makes multiple contacts with different domains of the 23S rRNA in the assembled 50S subunit and ribosome. Forms part of the polypeptide exit tunnel. The polypeptide is Large ribosomal subunit protein uL4 (Neisseria gonorrhoeae (strain NCCP11945)).